The following is a 776-amino-acid chain: Mitochondrial intermediate peptidase (776 aa).

The transit peptide at 1–28 (MRRFSTLSRRLQRVVPASSASTANTSPS) directs the protein to the mitochondrion. Residue H561 participates in Zn(2+) binding. The active site involves E562. Positions 565 and 568 each coordinate Zn(2+).

It belongs to the peptidase M3 family. It depends on Zn(2+) as a cofactor.

The protein localises to the mitochondrion matrix. The enzyme catalyses Release of an N-terminal octapeptide as second stage of processing of some proteins imported into the mitochondrion.. Functionally, cleaves proteins, imported into the mitochondrion, to their mature size. While most mitochondrial precursor proteins are processed to the mature form in one step by mitochondrial processing peptidase (MPP), the sequential cleavage by MIP of an octapeptide after initial processing by MPP is a required step for a subgroup of nuclear-encoded precursor proteins destined for the matrix or the inner membrane. This Yarrowia lipolytica (strain CLIB 122 / E 150) (Yeast) protein is Mitochondrial intermediate peptidase (OCT1).